A 358-amino-acid polypeptide reads, in one-letter code: Fructose-bisphosphate aldolase 3, cytoplasmic (358 aa).

Arg39 is a binding site for substrate. Catalysis depends on Glu183, which acts as the Proton acceptor. Residue Lys225 is the Schiff-base intermediate with dihydroxyacetone-P of the active site. Substrate is bound by residues 266–268 (SGG) and Arg298.

The protein belongs to the class I fructose-bisphosphate aldolase family. In terms of assembly, homotetramer.

It localises to the cytoplasm. It is found in the cytosol. The catalysed reaction is beta-D-fructose 1,6-bisphosphate = D-glyceraldehyde 3-phosphate + dihydroxyacetone phosphate. It participates in carbohydrate degradation; glycolysis; D-glyceraldehyde 3-phosphate and glycerone phosphate from D-glucose: step 4/4. Functionally, fructose-bisphosphate aldolase that plays a key role in glycolysis and gluconeogenesis. The chain is Fructose-bisphosphate aldolase 3, cytoplasmic from Oryza sativa subsp. japonica (Rice).